Here is a 280-residue protein sequence, read N- to C-terminus: Meiotic spindle formation protein 2 (280 aa).

The tract at residues 1-104 is disordered; it reads MSGLDDRKKL…LPKSSPESSV (104 aa). Basic and acidic residues predominate over residues 72-92; it reads LHSESKKELSRNPVSRGEEHS. Positions 93–104 are enriched in low complexity; the sequence is SSLPKSSPESSV.

As to quaternary structure, interacts with mei-1.

Its subcellular location is the cytoplasm. The protein resides in the cytoskeleton. It localises to the spindle pole. Its function is as follows. Forms a heterodimeric complex in conjunction with mei-1 which severs microtubules in vitro in an ATP-dependent manner. This activity may promote rapid reorganization of cellular microtubule arrays. May act to target mei-1 within the cell. Required specifically for meiotic spindle formation in the female germline. The chain is Meiotic spindle formation protein 2 (mei-2) from Caenorhabditis elegans.